A 232-amino-acid polypeptide reads, in one-letter code: MQKNAAHTYAISSLLVLSLTGCAWIPSTPLVQGATSAQPVPGPTPVANGSIFQSAQPINYGYQPLFEDRRPRNIGDTLTIVLQENVSASKSSSANASRDGKTNFGFDTVPRYLQGLFGNARADVEASGGNTFNGKGGANASNTFSGTLTVTVDQVLVNGNLHVVGEKQIAINQGTEFIRFSGVVNPRTISGSNTVPSTQVVDARIEYVGNGYINEAQNMGWLQHFFLNLSPM.

Positions 1-21 (MQKNAAHTYAISSLLVLSLTG) are cleaved as a signal peptide. Cys22 carries N-palmitoyl cysteine lipidation. Cys22 carries the S-diacylglycerol cysteine lipid modification.

Belongs to the FlgH family. As to quaternary structure, the basal body constitutes a major portion of the flagellar organelle and consists of four rings (L,P,S, and M) mounted on a central rod.

The protein resides in the cell outer membrane. The protein localises to the bacterial flagellum basal body. In terms of biological role, assembles around the rod to form the L-ring and probably protects the motor/basal body from shearing forces during rotation. The sequence is that of Flagellar L-ring protein from Shigella boydii serotype 4 (strain Sb227).